A 504-amino-acid chain; its full sequence is Maturase K (504 aa).

Belongs to the intron maturase 2 family. MatK subfamily.

The protein localises to the plastid. It localises to the chloroplast. Functionally, usually encoded in the trnK tRNA gene intron. Probably assists in splicing its own and other chloroplast group II introns. The polypeptide is Maturase K (Aucuba japonica (Japanese laurel)).